Here is a 200-residue protein sequence, read N- to C-terminus: Pyrrolidone-carboxylate peptidase (200 aa).

Catalysis depends on residues Glu78, Cys141, and His165.

It belongs to the peptidase C15 family. Homotetramer.

Its subcellular location is the cytoplasm. The enzyme catalyses Release of an N-terminal pyroglutamyl group from a polypeptide, the second amino acid generally not being Pro.. Functionally, removes 5-oxoproline from various penultimate amino acid residues except L-proline. In Thermococcus onnurineus (strain NA1), this protein is Pyrrolidone-carboxylate peptidase.